The primary structure comprises 356 residues: MELTDLLLAAMLLAVARLTLSSPVAPACDPRLLNKLLRDSHLLHSRLSQCPDVDPLSIPVLLPAVDFSLGEWKTQTEQSKAQDILGAVSLLLEGVMAARGQLEPSCLSSLLGQLSGQVRLLLGALQGLLGTQLPLQGRTTAHKDPNALFLSLQQLLRGKVRFLLLVEGPTLCVRRTLPTTAVPSSTSQLLTLNKFPNRTSGLLETNFSVTARTAGPGLLSRLQGFRVKITPGQLNQTSRSPVQISGYLNRTHGPVNGTHGLFAGTSLQTLEASDISPGAFNKGSLAFNLQGGLPPSPSLAPDGHTPFPPSPALPTTHGSPPQLHPLFPDPSTTMPNSTAPHPVTMYPHPRNLSQET.

Positions 1 to 21 (MELTDLLLAAMLLAVARLTLS) are cleaved as a signal peptide. Disulfide bonds link cysteine 28/cysteine 172 and cysteine 50/cysteine 106. N-linked (GlcNAc...) asparagine glycans are attached at residues asparagine 197, asparagine 206, asparagine 235, asparagine 249, asparagine 256, asparagine 336, and asparagine 351. Residues 291-356 (GGLPPSPSLA…PHPRNLSQET (66 aa)) are disordered. A compositionally biased stretch (polar residues) spans 330–339 (PSTTMPNSTA).

The protein belongs to the EPO/TPO family. In terms of tissue distribution, found mainly in the liver, kidney and skeletal muscle.

The protein localises to the secreted. Lineage-specific cytokine affecting the proliferation and maturation of megakaryocytes from their committed progenitor cells. It acts at a late stage of megakaryocyte development. It may be the major physiological regulator of circulating platelets. The protein is Thrombopoietin (Thpo) of Mus musculus (Mouse).